The sequence spans 304 residues: Undecaprenyl-diphosphatase (304 aa).

Transmembrane regions (helical) follow at residues 5-25 (FLFI…EFVP), 47-67 (GFPE…VVVL), 72-92 (ISSS…LKTS), 111-131 (FGIN…LFHD), 137-157 (LFST…LIVI), 209-231 (ISGL…AMVG), 248-268 (TNWI…LVVI), and 283-303 (FAIY…TKVI).

The protein belongs to the UppP family.

The protein localises to the cell membrane. It catalyses the reaction di-trans,octa-cis-undecaprenyl diphosphate + H2O = di-trans,octa-cis-undecaprenyl phosphate + phosphate + H(+). Functionally, catalyzes the dephosphorylation of undecaprenyl diphosphate (UPP). Confers resistance to bacitracin. The protein is Undecaprenyl-diphosphatase of Clostridium perfringens (strain ATCC 13124 / DSM 756 / JCM 1290 / NCIMB 6125 / NCTC 8237 / Type A).